The following is a 144-amino-acid chain: Maximins 7/H6 (144 aa).

Positions 1-18 are cleaved as a signal peptide; sequence MNFKYIVAVSFLIASAYA. The propeptide occupies 19-43; the sequence is RSEENDEQSLSQRDILEEESLREIR. At N70 the chain carries Asparagine amide. A propeptide spanning residues 74-123 is cleaved from the precursor; it reads TAEDHEVMKRLEAVMRDLDSLDYPEEAAERETRGFNQEEIANLFTKKEKR. Residue L143 is modified to Leucine amide.

Belongs to the bombinin family. In terms of tissue distribution, expressed by the skin glands.

Its subcellular location is the secreted. Maximin-7 shows antimicrobial activity against bacteria and against the fungus C.albicans. It has little hemolytic activity. Its function is as follows. Maximin-H6 shows antimicrobial activity against bacteria and against the fungus C.albicans. Shows strong hemolytic activity. In Bombina maxima (Giant fire-bellied toad), this protein is Maximins 7/H6.